Here is a 96-residue protein sequence, read N- to C-terminus: UPF0235 protein VIBHAR_03581 (96 aa).

It belongs to the UPF0235 family.

The sequence is that of UPF0235 protein VIBHAR_03581 from Vibrio campbellii (strain ATCC BAA-1116).